Reading from the N-terminus, the 263-residue chain is Endonuclease 8 (263 aa).

P2 serves as the catalytic Schiff-base intermediate with DNA. The Proton donor role is filled by E3. Catalysis depends on K53, which acts as the Proton donor; for beta-elimination activity. DNA contacts are provided by Q70, R125, and N169. The FPG-type zinc finger occupies 229-263; sequence KLFHRDGEACERCGGIIEKTTLSSRPFYWCPHCQK. The Proton donor; for delta-elimination activity role is filled by R253.

Belongs to the FPG family. Zn(2+) is required as a cofactor.

It catalyses the reaction 2'-deoxyribonucleotide-(2'-deoxyribose 5'-phosphate)-2'-deoxyribonucleotide-DNA = a 3'-end 2'-deoxyribonucleotide-(2,3-dehydro-2,3-deoxyribose 5'-phosphate)-DNA + a 5'-end 5'-phospho-2'-deoxyribonucleoside-DNA + H(+). Functionally, involved in base excision repair of DNA damaged by oxidation or by mutagenic agents. Acts as a DNA glycosylase that recognizes and removes damaged bases. Has a preference for oxidized pyrimidines, such as thymine glycol, 5,6-dihydrouracil and 5,6-dihydrothymine. Has AP (apurinic/apyrimidinic) lyase activity and introduces nicks in the DNA strand. Cleaves the DNA backbone by beta-delta elimination to generate a single-strand break at the site of the removed base with both 3'- and 5'-phosphates. The protein is Endonuclease 8 of Salmonella typhimurium (strain SL1344).